A 158-amino-acid chain; its full sequence is uncharacterized protein (158 aa).

This is an uncharacterized protein from Pasteurella multocida (strain Pm70).